Reading from the N-terminus, the 361-residue chain is Alanine racemase (361 aa).

Residue lysine 35 is the Proton acceptor; specific for D-alanine of the active site. Lysine 35 bears the N6-(pyridoxal phosphate)lysine mark. Substrate is bound at residue arginine 132. Tyrosine 257 functions as the Proton acceptor; specific for L-alanine in the catalytic mechanism. Methionine 305 contributes to the substrate binding site.

It belongs to the alanine racemase family. Pyridoxal 5'-phosphate is required as a cofactor.

The catalysed reaction is L-alanine = D-alanine. Its pathway is amino-acid biosynthesis; D-alanine biosynthesis; D-alanine from L-alanine: step 1/1. In terms of biological role, catalyzes the interconversion of L-alanine and D-alanine. May also act on other amino acids. In Thioalkalivibrio sulfidiphilus (strain HL-EbGR7), this protein is Alanine racemase (alr).